We begin with the raw amino-acid sequence, 402 residues long: NADH-quinone oxidoreductase subunit D (402 aa).

Belongs to the complex I 49 kDa subunit family. As to quaternary structure, NDH-1 is composed of 14 different subunits. Subunits NuoB, C, D, E, F, and G constitute the peripheral sector of the complex.

The protein localises to the cell inner membrane. It carries out the reaction a quinone + NADH + 5 H(+)(in) = a quinol + NAD(+) + 4 H(+)(out). Its function is as follows. NDH-1 shuttles electrons from NADH, via FMN and iron-sulfur (Fe-S) centers, to quinones in the respiratory chain. The immediate electron acceptor for the enzyme in this species is believed to be ubiquinone. Couples the redox reaction to proton translocation (for every two electrons transferred, four hydrogen ions are translocated across the cytoplasmic membrane), and thus conserves the redox energy in a proton gradient. The chain is NADH-quinone oxidoreductase subunit D from Cereibacter sphaeroides (strain ATCC 17029 / ATH 2.4.9) (Rhodobacter sphaeroides).